Consider the following 437-residue polypeptide: Triacylglycerol lipase (437 aa).

Residues 1–100 (MVSYVVALPE…AELANASLLQ (100 aa)) enclose the PE domain. Residues 101-206 (SEFASGIGNG…GNSPPPLLNS (106 aa)) form a linker region. The tract at residues 207–437 (LLGQTVQYTT…QINQQLGIAA (231 aa)) is lipase. The short motif at 239–241 (HGG) is the Involved in the stabilization of the negatively charged intermediate by the formation of the oxyanion hole element. Residues Ser-309, Asp-383, and His-413 contribute to the active site.

This sequence in the N-terminal section; belongs to the mycobacterial PE family. PGRS subfamily. The protein in the C-terminal section; belongs to the 'GDXG' lipolytic enzyme family. As to quaternary structure, forms aggregates via its PE domain. Upon export, the PE domain is removed by proteolytic cleavage. Cleavage occurs at the cell surface and is not required for secretion. Cleaved after Gly-149 by the aspartic protease PecA. May also be cleaved before Leu-98 and after Ala-136.

The protein resides in the cytoplasm. It localises to the secreted. Its subcellular location is the cell wall. It is found in the cell surface. It catalyses the reaction a triacylglycerol + H2O = a diacylglycerol + a fatty acid + H(+). The enzyme catalyses 1,2,3-tri-(9Z-octadecenoyl)-glycerol + H2O = di-(9Z)-octadecenoylglycerol + (9Z)-octadecenoate + H(+). The catalysed reaction is an acetyl ester + H2O = an aliphatic alcohol + acetate + H(+). It carries out the reaction a butanoate ester + H2O = an aliphatic alcohol + butanoate + H(+). It catalyses the reaction a hexanoate ester + H2O = an aliphatic alcohol + hexanoate + H(+). The enzyme catalyses an octanoate ester + H2O = an aliphatic alcohol + octanoate + H(+). The catalysed reaction is a dodecanoate ester + H2O = an aliphatic alcohol + dodecanoate + H(+). It carries out the reaction a tetradecanoate ester + H2O = an aliphatic alcohol + tetradecanoate + H(+). It catalyses the reaction hexadecanoate ester + H2O = an aliphatic alcohol + hexadecanoate + H(+). The enzyme catalyses octadecanoate ester + H2O = an aliphatic alcohol + octadecanoate + H(+). The catalysed reaction is 1-butyrylglycerol + H2O = butanoate + glycerol + H(+). It carries out the reaction 1,2,3-tributanoylglycerol + H2O = dibutanoylglycerol + butanoate + H(+). With respect to regulation, PE domain down-regulates lipase activity. Cleavage by PecA does not affect surface localization and lipase activity. Its activity is regulated as follows. Inhibited by diethyl-p-nitrophenyl phosphate (E-600) at 0.5 uM, by phenylmethanesulfonyl fluoride at 5 mM and by polyethylene glycol sorbitan monolaurate (Tween 20). Also inhibited by CaCl(2), CoCl(2), MnCl(2), ZnCl(2) and MgCl(2). Inhibited by several hydrazides compounds. Stimulated slightly by SDS at concentrations up to 2 mM, above which the activity is severely inhibited. Catalyzes the hydrolysis of both intracellular and extracellular triacylglycerol (TAG). In vitro, can also hydrolyze p-nitrophenyl (pNP) esters with various chain lengths, including pNP-acetate (C2), pNP-butyrate (C4), pNP-caproate (C6), pNP-caprylate (C8), pNP-laurate (C12), pNP-myristate (C14), pNP-palmitate (C16) and pNP-stearate (C18). Also hydrolyzes monobutyrin, tributyrin and trioctanoin. Overexpression results in increase of virulence characterized by reduced survival of infected mouse and increased burden of bacilli in the lungs. Hydrolyzes internal or host-derived TAG depending on its localization. Functionally, hydrolyzes TAG that accumulates within mycobacterial intracytosolic lipid inclusions (ILI). Probably responsible for the utilization of stored long-chain TAG during the dormancy and reactivation stages of the pathogen. Its function is as follows. Hydrolyzes host-derived TAG. The sequence is that of Triacylglycerol lipase from Mycobacterium tuberculosis (strain ATCC 25618 / H37Rv).